The sequence spans 219 residues: Cytidylate kinase (219 aa).

An ATP-binding site is contributed by 21–29 (GPAASGKGT).

It belongs to the cytidylate kinase family. Type 1 subfamily.

It localises to the cytoplasm. It catalyses the reaction CMP + ATP = CDP + ADP. The enzyme catalyses dCMP + ATP = dCDP + ADP. In Rickettsia typhi (strain ATCC VR-144 / Wilmington), this protein is Cytidylate kinase.